A 341-amino-acid polypeptide reads, in one-letter code: Methionine import ATP-binding protein MetN 3 (341 aa).

The region spanning 2-241 (ILLENVKKIY…PQQDITKRFV (240 aa)) is the ABC transporter domain. 38–45 (GYSGAGKS) contributes to the ATP binding site.

This sequence belongs to the ABC transporter superfamily. Methionine importer (TC 3.A.1.24) family. As to quaternary structure, the complex is composed of two ATP-binding proteins (MetN), two transmembrane proteins (MetI) and a solute-binding protein (MetQ).

The protein resides in the cell membrane. The catalysed reaction is L-methionine(out) + ATP + H2O = L-methionine(in) + ADP + phosphate + H(+). The enzyme catalyses D-methionine(out) + ATP + H2O = D-methionine(in) + ADP + phosphate + H(+). Its function is as follows. Part of the ABC transporter complex MetNIQ involved in methionine import. Responsible for energy coupling to the transport system. The polypeptide is Methionine import ATP-binding protein MetN 3 (Bacillus cereus (strain ATCC 10987 / NRS 248)).